The sequence spans 244 residues: U11/U12 small nuclear ribonucleoprotein 35 kDa protein (244 aa).

Residues 51 to 129 (LTLFVARLNS…HEIFVDYELE (79 aa)) form the RRM domain. The segment covering 146-162 (GKKESGQLRFGGRDRPF) has biased composition (basic and acidic residues). Residues 146-244 (GKKESGQLRF…KTRDKRDRSK (99 aa)) are disordered. Residue Lys172 forms a Glycyl lysine isopeptide (Lys-Gly) (interchain with G-Cter in SUMO2) linkage. Basic and acidic residues-rich tracts occupy residues 173–185 (NEPH…ERRE) and 192–244 (RHWD…DRSK).

In terms of assembly, component of the U11/U12 snRNPs that are part of the U12-type spliceosome.

It localises to the nucleus. This Rattus norvegicus (Rat) protein is U11/U12 small nuclear ribonucleoprotein 35 kDa protein (Snrnp35).